The sequence spans 401 residues: Succinyl-diaminopimelate desuccinylase (401 aa).

His-71 contributes to the Zn(2+) binding site. The active site involves Asp-73. Asp-104 is a binding site for Zn(2+). The Proton acceptor role is filled by Glu-138. Residues Glu-139, Glu-167, and His-352 each contribute to the Zn(2+) site.

It belongs to the peptidase M20A family. DapE subfamily. In terms of assembly, homodimer. The cofactor is Zn(2+). Co(2+) is required as a cofactor.

It catalyses the reaction N-succinyl-(2S,6S)-2,6-diaminopimelate + H2O = (2S,6S)-2,6-diaminopimelate + succinate. It participates in amino-acid biosynthesis; L-lysine biosynthesis via DAP pathway; LL-2,6-diaminopimelate from (S)-tetrahydrodipicolinate (succinylase route): step 3/3. In terms of biological role, catalyzes the hydrolysis of N-succinyl-L,L-diaminopimelic acid (SDAP), forming succinate and LL-2,6-diaminopimelate (DAP), an intermediate involved in the bacterial biosynthesis of lysine and meso-diaminopimelic acid, an essential component of bacterial cell walls. This Wolbachia sp. subsp. Brugia malayi (strain TRS) protein is Succinyl-diaminopimelate desuccinylase.